We begin with the raw amino-acid sequence, 278 residues long: MTREFELENNYQLCDEIGRGRFGTITRCFSPATKEFYACKTIDKRVLIDALDRECIETEPRIMAMLPPHPNIIRIFDLYETEDSLAIVMELVDPPMTIYDRLISAGGRLSESESASYAKQILSALAHCHRCDVVHRDVKPDNVLVDLVSGGVKLCDFGSAVWLGGETAEGVVGTPYYVAPEVVMGRKYDEKVDIWSAGVVIYTMLAGEPPFNGETAEDIFESILRGNLRFPPKKFGSVSSEAKDLLRKMICRDVSRRFSAEDALRHSWMMNVGNLQSN.

A Protein kinase domain is found at 11-269; that stretch reads YQLCDEIGRG…AEDALRHSWM (259 aa). Residues 17 to 25 and K40 each bind ATP; that span reads IGRGRFGTI. D137 (proton acceptor) is an active-site residue.

The protein belongs to the protein kinase superfamily. Ser/Thr protein kinase family. Expressed in flowers and roots, and at lower levels in cauline leaves. Barely detectable in rosette leaves and stems.

It catalyses the reaction L-seryl-[protein] + ATP = O-phospho-L-seryl-[protein] + ADP + H(+). The catalysed reaction is L-threonyl-[protein] + ATP = O-phospho-L-threonyl-[protein] + ADP + H(+). In terms of biological role, calcium-independent kinase involved in light-dependent phosphoenolpyruvate carboxylase phosphorylation. This Arabidopsis thaliana (Mouse-ear cress) protein is Phosphoenolpyruvate carboxylase kinase 2 (PPCK2).